Here is a 394-residue protein sequence, read N- to C-terminus: Elongation factor Tu (394 aa).

Residues 10 to 204 (KPHINIGTIG…AVDDNIPTPE (195 aa)) enclose the tr-type G domain. Residues 19–26 (GHVDHGKT) form a G1 region. 19-26 (GHVDHGKT) is a GTP binding site. Thr26 is a binding site for Mg(2+). The tract at residues 60–64 (GITIN) is G2. Residues 81–84 (DCPG) form a G3 region. Residues 81–85 (DCPGH) and 136–139 (NKVD) contribute to the GTP site. Residues 136–139 (NKVD) are G4. A G5 region spans residues 174 to 176 (SAL).

It belongs to the TRAFAC class translation factor GTPase superfamily. Classic translation factor GTPase family. EF-Tu/EF-1A subfamily. As to quaternary structure, monomer.

It localises to the cytoplasm. It catalyses the reaction GTP + H2O = GDP + phosphate + H(+). GTP hydrolase that promotes the GTP-dependent binding of aminoacyl-tRNA to the A-site of ribosomes during protein biosynthesis. The polypeptide is Elongation factor Tu (Chlamydia pneumoniae (Chlamydophila pneumoniae)).